A 232-amino-acid chain; its full sequence is Octanoyltransferase (232 aa).

The BPL/LPL catalytic domain maps to 44 to 219 (EHTGDELWVV…QLARQFGLVL (176 aa)). Residues 83 to 90 (RGGQVTYH), 150 to 152 (ALG), and 163 to 165 (GLS) each bind substrate. Catalysis depends on cysteine 181, which acts as the Acyl-thioester intermediate.

Belongs to the LipB family.

It localises to the cytoplasm. It carries out the reaction octanoyl-[ACP] + L-lysyl-[protein] = N(6)-octanoyl-L-lysyl-[protein] + holo-[ACP] + H(+). Its pathway is protein modification; protein lipoylation via endogenous pathway; protein N(6)-(lipoyl)lysine from octanoyl-[acyl-carrier-protein]: step 1/2. Catalyzes the transfer of endogenously produced octanoic acid from octanoyl-acyl-carrier-protein onto the lipoyl domains of lipoate-dependent enzymes. Lipoyl-ACP can also act as a substrate although octanoyl-ACP is likely to be the physiological substrate. The sequence is that of Octanoyltransferase from Xanthomonas campestris pv. campestris (strain B100).